A 302-amino-acid chain; its full sequence is Homoserine O-acetyltransferase (302 aa).

The Acyl-thioester intermediate role is filled by Cys142. The substrate site is built by Lys163 and Ser192. His235 (proton acceptor) is an active-site residue. Glu237 is a catalytic residue. Arg249 serves as a coordination point for substrate.

Belongs to the MetA family.

The protein resides in the cytoplasm. The enzyme catalyses L-homoserine + acetyl-CoA = O-acetyl-L-homoserine + CoA. It functions in the pathway amino-acid biosynthesis; L-methionine biosynthesis via de novo pathway; O-acetyl-L-homoserine from L-homoserine: step 1/1. In terms of biological role, transfers an acetyl group from acetyl-CoA to L-homoserine, forming acetyl-L-homoserine. In Clostridium novyi (strain NT), this protein is Homoserine O-acetyltransferase.